A 94-amino-acid chain; its full sequence is Co-chaperonin GroES (94 aa).

The protein belongs to the GroES chaperonin family. As to quaternary structure, heptamer of 7 subunits arranged in a ring. Interacts with the chaperonin GroEL.

It localises to the cytoplasm. In terms of biological role, together with the chaperonin GroEL, plays an essential role in assisting protein folding. The GroEL-GroES system forms a nano-cage that allows encapsulation of the non-native substrate proteins and provides a physical environment optimized to promote and accelerate protein folding. GroES binds to the apical surface of the GroEL ring, thereby capping the opening of the GroEL channel. In Lactiplantibacillus plantarum (strain ATCC BAA-793 / NCIMB 8826 / WCFS1) (Lactobacillus plantarum), this protein is Co-chaperonin GroES.